The primary structure comprises 199 residues: Holliday junction branch migration complex subunit RuvA (199 aa).

A domain I region spans residues 1 to 63 (MIASVRGEVL…EDSMTLYGFS (63 aa)). The interval 64–141 (DTESKDLFSL…DAVATTAGAA (78 aa)) is domain II. The tract at residues 141–145 (ASGAV) is flexible linker. Positions 146–199 (VGSSIRDQIVEALEGLGFPIKQAEQATDSVLAESPEATTSVALRSALSLLGKTR) are domain III.

Belongs to the RuvA family. Homotetramer. Forms an RuvA(8)-RuvB(12)-Holliday junction (HJ) complex. HJ DNA is sandwiched between 2 RuvA tetramers; dsDNA enters through RuvA and exits via RuvB. An RuvB hexamer assembles on each DNA strand where it exits the tetramer. Each RuvB hexamer is contacted by two RuvA subunits (via domain III) on 2 adjacent RuvB subunits; this complex drives branch migration. In the full resolvosome a probable DNA-RuvA(4)-RuvB(12)-RuvC(2) complex forms which resolves the HJ.

Its subcellular location is the cytoplasm. Its function is as follows. The RuvA-RuvB-RuvC complex processes Holliday junction (HJ) DNA during genetic recombination and DNA repair, while the RuvA-RuvB complex plays an important role in the rescue of blocked DNA replication forks via replication fork reversal (RFR). RuvA specifically binds to HJ cruciform DNA, conferring on it an open structure. The RuvB hexamer acts as an ATP-dependent pump, pulling dsDNA into and through the RuvAB complex. HJ branch migration allows RuvC to scan DNA until it finds its consensus sequence, where it cleaves and resolves the cruciform DNA. This Rhodococcus erythropolis (strain PR4 / NBRC 100887) protein is Holliday junction branch migration complex subunit RuvA.